The chain runs to 401 residues: Nicotinate phosphoribosyltransferase (401 aa).

His-224 is subject to Phosphohistidine; by autocatalysis.

It belongs to the NAPRTase family. Post-translationally, transiently phosphorylated on a His residue during the reaction cycle. Phosphorylation strongly increases the affinity for substrates and increases the rate of nicotinate D-ribonucleotide production. Dephosphorylation regenerates the low-affinity form of the enzyme, leading to product release.

The enzyme catalyses nicotinate + 5-phospho-alpha-D-ribose 1-diphosphate + ATP + H2O = nicotinate beta-D-ribonucleotide + ADP + phosphate + diphosphate. Its pathway is cofactor biosynthesis; NAD(+) biosynthesis; nicotinate D-ribonucleotide from nicotinate: step 1/1. Its function is as follows. Catalyzes the synthesis of beta-nicotinate D-ribonucleotide from nicotinate and 5-phospho-D-ribose 1-phosphate at the expense of ATP. This is Nicotinate phosphoribosyltransferase from Pseudomonas putida (strain ATCC 47054 / DSM 6125 / CFBP 8728 / NCIMB 11950 / KT2440).